Here is a 432-residue protein sequence, read N- to C-terminus: Glutamyl-tRNA reductase (432 aa).

Substrate-binding positions include 49 to 52 (TCNR), Ser-101, 106 to 108 (EPQ), and Gln-112. Cys-50 serves as the catalytic Nucleophile. Residue 181-186 (GAGETI) participates in NADP(+) binding. The segment at 408–432 (PEKPGYRHPPVATPIVRTDDANPAP) is disordered.

This sequence belongs to the glutamyl-tRNA reductase family. In terms of assembly, homodimer.

It carries out the reaction (S)-4-amino-5-oxopentanoate + tRNA(Glu) + NADP(+) = L-glutamyl-tRNA(Glu) + NADPH + H(+). The protein operates within porphyrin-containing compound metabolism; protoporphyrin-IX biosynthesis; 5-aminolevulinate from L-glutamyl-tRNA(Glu): step 1/2. Functionally, catalyzes the NADPH-dependent reduction of glutamyl-tRNA(Glu) to glutamate 1-semialdehyde (GSA). This chain is Glutamyl-tRNA reductase, found in Xanthomonas campestris pv. campestris (strain 8004).